The primary structure comprises 140 residues: Nucleoside diphosphate kinase (140 aa).

Positions 11, 59, 87, 93, 104, and 114 each coordinate ATP. His117 (pros-phosphohistidine intermediate) is an active-site residue.

Belongs to the NDK family. In terms of assembly, homotetramer. Mg(2+) is required as a cofactor.

It localises to the cytoplasm. It carries out the reaction a 2'-deoxyribonucleoside 5'-diphosphate + ATP = a 2'-deoxyribonucleoside 5'-triphosphate + ADP. It catalyses the reaction a ribonucleoside 5'-diphosphate + ATP = a ribonucleoside 5'-triphosphate + ADP. Major role in the synthesis of nucleoside triphosphates other than ATP. The ATP gamma phosphate is transferred to the NDP beta phosphate via a ping-pong mechanism, using a phosphorylated active-site intermediate. The polypeptide is Nucleoside diphosphate kinase (Rickettsia conorii (strain ATCC VR-613 / Malish 7)).